The primary structure comprises 65 residues: Large ribosomal subunit protein uL29c (65 aa).

The protein belongs to the universal ribosomal protein uL29 family.

The protein localises to the plastid. Its subcellular location is the chloroplast. This Guillardia theta (Cryptophyte) protein is Large ribosomal subunit protein uL29c (rpl29).